Here is a 303-residue protein sequence, read N- to C-terminus: Leukocyte immunoglobulin-like receptor subfamily B member 4B (303 aa).

Positions 1–23 (MIAMLTVLLYLALILEPRTAVQA) are cleaved as a signal peptide. Residues 24-238 (GHLPKPIIWA…TEDGLETYQK (215 aa)) lie on the Extracellular side of the membrane. Ig-like C2-type domains are found at residues 42–123 (YTSV…AYEN) and 124–212 (PSLS…KPSN). An intrachain disulfide couples Cys-49 to Cys-98. N-linked (GlcNAc...) asparagine glycans are attached at residues Asn-79, Asn-133, and Asn-191. A disulfide bridge links Cys-144 with Cys-196. A helical membrane pass occupies residues 239–260 (ILIGVLVSFLLLFFLLLFLILI). Residues 261-303 (GYQCRHKNKANASVKNTQSEDNAELNSWNPQNEDPPRELCTPR) are Cytoplasmic-facing. The segment covering 275–292 (KNTQSEDNAELNSWNPQN) has biased composition (polar residues). The interval 275 to 303 (KNTQSEDNAELNSWNPQNEDPPRELCTPR) is disordered.

As to quaternary structure, monomer and homodimer. In terms of tissue distribution, expressed on mast cells (at protein level). Also expressed at much lower levels on natural killer cells (at protein level).

The protein localises to the cell membrane. In terms of biological role, plays a role in mast cell activation. The chain is Leukocyte immunoglobulin-like receptor subfamily B member 4B from Mus musculus (Mouse).